Here is a 152-residue protein sequence, read N- to C-terminus: Large ribosomal subunit protein bL9 (152 aa).

Belongs to the bacterial ribosomal protein bL9 family.

Its function is as follows. Binds to the 23S rRNA. In Nocardia farcinica (strain IFM 10152), this protein is Large ribosomal subunit protein bL9.